The following is a 199-amino-acid chain: Glycerol-3-phosphate acyltransferase (199 aa).

A run of 5 helical transmembrane segments spans residues Ala-5–Cys-25, Ala-54–Phe-74, Ala-82–Phe-102, Val-114–Phe-134, and Tyr-154–Ile-174.

This sequence belongs to the PlsY family. As to quaternary structure, probably interacts with PlsX.

The protein resides in the cell inner membrane. The enzyme catalyses an acyl phosphate + sn-glycerol 3-phosphate = a 1-acyl-sn-glycero-3-phosphate + phosphate. It functions in the pathway lipid metabolism; phospholipid metabolism. Catalyzes the transfer of an acyl group from acyl-phosphate (acyl-PO(4)) to glycerol-3-phosphate (G3P) to form lysophosphatidic acid (LPA). This enzyme utilizes acyl-phosphate as fatty acyl donor, but not acyl-CoA or acyl-ACP. This chain is Glycerol-3-phosphate acyltransferase, found in Haemophilus ducreyi (strain 35000HP / ATCC 700724).